The following is a 25-amino-acid chain: uncharacterized protein (25 aa).

This is an uncharacterized protein from Escherichia coli (Bacteriophage T3).